The following is a 63-amino-acid chain: uncharacterized protein (63 aa).

This is an uncharacterized protein from Orgyia pseudotsugata (Douglas-fir tussock moth).